The primary structure comprises 111 residues: MSYAKAISKYIRISPRKARLAAGLIRGLSVSDASLQLTFSGLKGGRLLKKTLDSAVANAETQLDMRRENLKVVEVRVDAGPTLKRAKPKNRGGRHPIMKRTSHFTVIVSNL.

Belongs to the universal ribosomal protein uL22 family. As to quaternary structure, part of the 50S ribosomal subunit.

Functionally, this protein binds specifically to 23S rRNA; its binding is stimulated by other ribosomal proteins, e.g. L4, L17, and L20. It is important during the early stages of 50S assembly. It makes multiple contacts with different domains of the 23S rRNA in the assembled 50S subunit and ribosome. Its function is as follows. The globular domain of the protein is located near the polypeptide exit tunnel on the outside of the subunit, while an extended beta-hairpin is found that lines the wall of the exit tunnel in the center of the 70S ribosome. This chain is Large ribosomal subunit protein uL22, found in Protochlamydia amoebophila (strain UWE25).